We begin with the raw amino-acid sequence, 138 residues long: Cysteine desulfuration protein SufE (138 aa).

The active-site Cysteine persulfide intermediate is the Cys-51.

This sequence belongs to the SufE family. Homodimer. Interacts with SufS.

It is found in the cytoplasm. The protein operates within cofactor biosynthesis; iron-sulfur cluster biosynthesis. In terms of biological role, participates in cysteine desulfuration mediated by SufS. Cysteine desulfuration mobilizes sulfur from L-cysteine to yield L-alanine and constitutes an essential step in sulfur metabolism for biosynthesis of a variety of sulfur-containing biomolecules. Functions as a sulfur acceptor for SufS, by mediating the direct transfer of the sulfur atom from the S-sulfanylcysteine of SufS, an intermediate product of cysteine desulfuration process. In Escherichia coli O8 (strain IAI1), this protein is Cysteine desulfuration protein SufE.